The chain runs to 223 residues: Deoxyribose-phosphate aldolase (223 aa).

Aspartate 89 functions as the Proton donor/acceptor in the catalytic mechanism. Lysine 154 functions as the Schiff-base intermediate with acetaldehyde in the catalytic mechanism. Lysine 183 serves as the catalytic Proton donor/acceptor.

It belongs to the DeoC/FbaB aldolase family. DeoC type 1 subfamily.

It localises to the cytoplasm. The enzyme catalyses 2-deoxy-D-ribose 5-phosphate = D-glyceraldehyde 3-phosphate + acetaldehyde. The protein operates within carbohydrate degradation; 2-deoxy-D-ribose 1-phosphate degradation; D-glyceraldehyde 3-phosphate and acetaldehyde from 2-deoxy-alpha-D-ribose 1-phosphate: step 2/2. Its function is as follows. Catalyzes a reversible aldol reaction between acetaldehyde and D-glyceraldehyde 3-phosphate to generate 2-deoxy-D-ribose 5-phosphate. The chain is Deoxyribose-phosphate aldolase from Thermoanaerobacter pseudethanolicus (strain ATCC 33223 / 39E) (Clostridium thermohydrosulfuricum).